We begin with the raw amino-acid sequence, 239 residues long: tRNA (guanine-N(1)-)-methyltransferase (239 aa).

S-adenosyl-L-methionine-binding positions include Gly108 and 127–132 (LGDYVL).

The protein belongs to the RNA methyltransferase TrmD family. In terms of assembly, homodimer.

Its subcellular location is the cytoplasm. It carries out the reaction guanosine(37) in tRNA + S-adenosyl-L-methionine = N(1)-methylguanosine(37) in tRNA + S-adenosyl-L-homocysteine + H(+). Its function is as follows. Specifically methylates guanosine-37 in various tRNAs. In Streptococcus pneumoniae (strain P1031), this protein is tRNA (guanine-N(1)-)-methyltransferase.